A 199-amino-acid polypeptide reads, in one-letter code: Rho-related protein racG (199 aa).

7 residues coordinate GTP: Ala13, Gly15, Lys16, Thr17, Cys18, Tyr32, and Thr35. Residue Thr17 coordinates Mg(2+). Short sequence motifs (switch) lie at residues Asn26–Phe37 and Asp57–Thr75. Thr35 is a Mg(2+) binding site. The GTP site is built by Lys116, Asp118, and Ala159. Cysteine methyl ester is present on Cys196. Residue Cys196 is the site of S-geranylgeranyl cysteine attachment. Residues Ser197–Phe199 constitute a propeptide, removed in mature form.

Belongs to the small GTPase superfamily. Rho family. Requires Mg(2+) as cofactor.

The protein resides in the cell membrane. It localises to the cytoplasm. It is found in the cytoskeleton. The enzyme catalyses GTP + H2O = GDP + phosphate + H(+). Regulated by guanine nucleotide exchange factors (GEFs) which promote the exchange of bound GDP for free GTP, GTPase activating proteins (GAPs) which increase the GTP hydrolysis activity, and GDP dissociation inhibitors which inhibit the dissociation of the nucleotide from the GTPase. Small GTPase which cycles between active GTP-bound and inactive GDP-bound states. Involved in actin cytoskeleton remodeling during capping of surface receptors and uroid formation. The sequence is that of Rho-related protein racG from Entamoeba histolytica (strain ATCC 30459 / HM-1:IMSS / ABRM).